An 880-amino-acid chain; its full sequence is Guanine nucleotide-binding protein subunit beta 2 (880 aa).

Position 24 is a phosphoserine (S24). Kelch repeat units follow at residues 291 to 339, 377 to 425, and 501 to 552; these read NIYI…MVNN, HIFF…KIDI, and TVII…LTPS. The segment at 624–649 is disordered; the sequence is FNSGSAAQESPKAGASASSASAASFD. The span at 638–647 shows a compositional bias: low complexity; the sequence is ASASSASAAS. Residues 691 to 738 form a Kelch 4 repeat; sequence TVVLHGGSNGLNVLDDMWLMDLECETWTPIETFAKADSSEDGDEKLDS.

G proteins are composed of 3 units, alpha, beta and gamma. GPB1 interacts with the alpha subunit GPA2.

Its subcellular location is the cytoplasm. The protein localises to the mitochondrion. Its function is as follows. Beta subunit of a guanine nucleotide-binding protein (G protein). G proteins are involved as modulators or transducers in various transmembrane signaling systems. The beta and gamma chains are required for the GTPase activity, for replacement of GDP by GTP, and for G protein-effector interaction. Involved in the determination of the cAMP level according to nutritional conditions, most probably as a regulator of cAMP phosphodiesterase. Required for the control of pseudohyphal and haploid invasive growth. The sequence is that of Guanine nucleotide-binding protein subunit beta 2 (GPB2) from Saccharomyces cerevisiae (strain ATCC 204508 / S288c) (Baker's yeast).